Reading from the N-terminus, the 216-residue chain is UDP-N-acetylbacillosamine N-acetyltransferase (216 aa).

His137 serves as the catalytic Proton acceptor. His146 contacts acetyl-CoA.

Belongs to the transferase hexapeptide repeat family. In terms of assembly, forms oligomers.

The catalysed reaction is UDP-N-acetylbacillosamine + acetyl-CoA = UDP-N,N'-diacetylbacillosamine + CoA + H(+). Its function is as follows. Catalyzes the conversion of UDP-2,4,6-trideoxy-2-acetamido-4-amino glucose to UDP-2,4,6-trideoxy-2,4-diacetamido glucose, commonly known as UDP-N,N'-diacetylbacillosamine (UDP-diNAcBac). This Bacillus subtilis (strain 168) protein is UDP-N-acetylbacillosamine N-acetyltransferase.